We begin with the raw amino-acid sequence, 247 residues long: OCIA domain-containing protein 1 (247 aa).

The OCIA domain maps to Met1 to Glu112. 2 positions are modified to phosphoserine: Ser108 and Ser116. A disordered region spans residues Ser116–Glu247. Polar residues-rich tracts occupy residues Ser136 to Thr146 and Ala168 to Gly177. Composition is skewed to basic and acidic residues over residues Asp192–Glu210 and His218–Lys240. A phosphoserine mark is found at Ser193 and Ser198.

This sequence belongs to the OCIAD1 family. Interacts with OCIAD2. Interacts with STAT3.

It localises to the endosome. Functionally, maintains stem cell potency. Increases STAT3 phosphorylation and controls ERK phosphorylation. May act as a scaffold, increasing STAT3 recruitment onto endosomes. The polypeptide is OCIA domain-containing protein 1 (Rattus norvegicus (Rat)).